A 183-amino-acid chain; its full sequence is Shikimate kinase (183 aa).

Residue 25 to 30 participates in ATP binding; sequence GAGKTT. Threonine 29 contributes to the Mg(2+) binding site. The substrate site is built by aspartate 47, arginine 71, and glycine 93. An ATP-binding site is contributed by arginine 131. Arginine 150 lines the substrate pocket.

This sequence belongs to the shikimate kinase family. In terms of assembly, monomer. Requires Mg(2+) as cofactor.

It localises to the cytoplasm. The catalysed reaction is shikimate + ATP = 3-phosphoshikimate + ADP + H(+). It functions in the pathway metabolic intermediate biosynthesis; chorismate biosynthesis; chorismate from D-erythrose 4-phosphate and phosphoenolpyruvate: step 5/7. Catalyzes the specific phosphorylation of the 3-hydroxyl group of shikimic acid using ATP as a cosubstrate. In Dechloromonas aromatica (strain RCB), this protein is Shikimate kinase.